The chain runs to 193 residues: Copper-binding lipoprotein NosL (193 aa).

The signal sequence occupies residues 1–19 (MRTRLRFVLVAAALALLSA). The N-palmitoyl cysteine moiety is linked to residue cysteine 20. Residue cysteine 20 is the site of S-diacylglycerol cysteine attachment.

This sequence belongs to the NosL family. In terms of assembly, monomer. Apo-NosL can form homodimers.

The protein localises to the cell membrane. Its function is as follows. May act as a metallochaperone involved in nitrous oxide reductase assembly. Specifically binds Cu(+). The polypeptide is Copper-binding lipoprotein NosL (Achromobacter cycloclastes).